Here is a 93-residue protein sequence, read N- to C-terminus: MARSIKKGPFVDEKLFDKVQKAVASGNKSVIKTWSRRSTITPDLIGHTFAVHNGKKFIPVFVTENMVGHKLGEFAPTRIFFSHAGDRKSKVRK.

Belongs to the universal ribosomal protein uS19 family.

Its function is as follows. Protein S19 forms a complex with S13 that binds strongly to the 16S ribosomal RNA. This is Small ribosomal subunit protein uS19 from Syntrophus aciditrophicus (strain SB).